Reading from the N-terminus, the 492-residue chain is 56 kDa U1 small nuclear ribonucleoprotein component (492 aa).

Basic residues predominate over residues 1–15 (MRPRRRGLAYHHTKP). Disordered stretches follow at residues 1–35 (MRPR…QRRK) and 300–371 (DQFP…NKPG). Positions 18 to 30 (QLSQGHYPTTSND) are enriched in polar residues. The span at 310-321 (SNSPSSNSISSS) shows a compositional bias: low complexity. The span at 329-353 (TSYQTQPQRHAVNKPSNVLNSSNRH) shows a compositional bias: polar residues.

As to quaternary structure, component of the 18S U1 snRNP particle, a subcomplex of the spliceosome. Interacts with the nuclear cap-binding complex CBC1-CBC2 (yCBC). Directly contacts intronic sequences of substrate pre-RNA.

The protein resides in the nucleus. In terms of biological role, component of the U1 snRNP particle, which recognizes and binds the 5'-splice site of pre-mRNA. Together with other non-snRNP factors, U1 snRNP forms the spliceosomal commitment complex, that targets pre-mRNA to the splicing pathway. This chain is 56 kDa U1 small nuclear ribonucleoprotein component (SNU56), found in Saccharomyces cerevisiae (strain ATCC 204508 / S288c) (Baker's yeast).